Here is a 302-residue protein sequence, read N- to C-terminus: Nucleotide-binding protein STH186 (302 aa).

Residue G15–T22 coordinates ATP. D66–G69 is a GTP binding site.

It belongs to the RapZ-like family.

Its function is as follows. Displays ATPase and GTPase activities. The chain is Nucleotide-binding protein STH186 from Symbiobacterium thermophilum (strain DSM 24528 / JCM 14929 / IAM 14863 / T).